A 262-amino-acid chain; its full sequence is Hydroxyethylthiazole kinase (262 aa).

Methionine 41 provides a ligand contact to substrate. Positions 117 and 163 each coordinate ATP. Glycine 190 contributes to the substrate binding site.

Belongs to the Thz kinase family. The cofactor is Mg(2+).

The catalysed reaction is 5-(2-hydroxyethyl)-4-methylthiazole + ATP = 4-methyl-5-(2-phosphooxyethyl)-thiazole + ADP + H(+). The protein operates within cofactor biosynthesis; thiamine diphosphate biosynthesis; 4-methyl-5-(2-phosphoethyl)-thiazole from 5-(2-hydroxyethyl)-4-methylthiazole: step 1/1. Catalyzes the phosphorylation of the hydroxyl group of 4-methyl-5-beta-hydroxyethylthiazole (THZ). This is Hydroxyethylthiazole kinase from Levilactobacillus brevis (strain ATCC 367 / BCRC 12310 / CIP 105137 / JCM 1170 / LMG 11437 / NCIMB 947 / NCTC 947) (Lactobacillus brevis).